A 296-amino-acid polypeptide reads, in one-letter code: Phosphoribosylaminoimidazole-succinocarboxamide synthase (296 aa).

This sequence belongs to the SAICAR synthetase family.

It catalyses the reaction 5-amino-1-(5-phospho-D-ribosyl)imidazole-4-carboxylate + L-aspartate + ATP = (2S)-2-[5-amino-1-(5-phospho-beta-D-ribosyl)imidazole-4-carboxamido]succinate + ADP + phosphate + 2 H(+). It functions in the pathway purine metabolism; IMP biosynthesis via de novo pathway; 5-amino-1-(5-phospho-D-ribosyl)imidazole-4-carboxamide from 5-amino-1-(5-phospho-D-ribosyl)imidazole-4-carboxylate: step 1/2. The polypeptide is Phosphoribosylaminoimidazole-succinocarboxamide synthase (Geotalea uraniireducens (strain Rf4) (Geobacter uraniireducens)).